The sequence spans 534 residues: CTP synthase (534 aa).

An amidoligase domain region spans residues 1–267 (MTKYIFVTGG…DQIVCDHLKL (267 aa)). A CTP-binding site is contributed by S13. S13 contributes to the UTP binding site. 14 to 19 (SIGKGI) is a binding site for ATP. Y54 serves as a coordination point for L-glutamine. An ATP-binding site is contributed by D71. Mg(2+) is bound by residues D71 and E141. Residues 148-150 (DIE), 188-193 (KTKPTQ), and K224 each bind CTP. Residues 188 to 193 (KTKPTQ) and K224 each bind UTP. Position 240–242 (240–242 (RDV)) interacts with ATP. In terms of domain architecture, Glutamine amidotransferase type-1 spans 292–534 (KIALVGKYVE…FVTAAIKNSN (243 aa)). G354 lines the L-glutamine pocket. Residue C381 is the Nucleophile; for glutamine hydrolysis of the active site. L-glutamine is bound by residues 382–385 (LGMQ), E405, and R463. Catalysis depends on residues H508 and E510.

Belongs to the CTP synthase family. Homotetramer.

It catalyses the reaction UTP + L-glutamine + ATP + H2O = CTP + L-glutamate + ADP + phosphate + 2 H(+). The catalysed reaction is L-glutamine + H2O = L-glutamate + NH4(+). It carries out the reaction UTP + NH4(+) + ATP = CTP + ADP + phosphate + 2 H(+). Its pathway is pyrimidine metabolism; CTP biosynthesis via de novo pathway; CTP from UDP: step 2/2. Its activity is regulated as follows. Allosterically activated by GTP, when glutamine is the substrate; GTP has no effect on the reaction when ammonia is the substrate. The allosteric effector GTP functions by stabilizing the protein conformation that binds the tetrahedral intermediate(s) formed during glutamine hydrolysis. Inhibited by the product CTP, via allosteric rather than competitive inhibition. In terms of biological role, catalyzes the ATP-dependent amination of UTP to CTP with either L-glutamine or ammonia as the source of nitrogen. Regulates intracellular CTP levels through interactions with the four ribonucleotide triphosphates. The chain is CTP synthase from Streptococcus pyogenes serotype M4 (strain MGAS10750).